Reading from the N-terminus, the 196-residue chain is Probable thymidylate kinase (196 aa).

Position 9–16 (9–16 (GIDGSGKT)) interacts with ATP.

This sequence belongs to the thymidylate kinase family.

The enzyme catalyses dTMP + ATP = dTDP + ADP. This Methanococcus aeolicus (strain ATCC BAA-1280 / DSM 17508 / OCM 812 / Nankai-3) protein is Probable thymidylate kinase.